We begin with the raw amino-acid sequence, 116 residues long: PTS system cellobiose-specific EIIA component (116 aa).

In terms of domain architecture, PTS EIIA type-3 spans 11 to 109 (DDYMGVVMGI…AVEVVGQEQR (99 aa)). Histidine 85 serves as the catalytic Tele-phosphohistidine intermediate. Histidine 85 carries the post-translational modification Phosphohistidine; by HPr. Residue aspartate 88 participates in Mg(2+) binding.

As to quaternary structure, homotrimer. The cofactor is Mg(2+).

Functionally, the phosphoenolpyruvate-dependent sugar phosphotransferase system (sugar PTS), a major carbohydrate active transport system, catalyzes the phosphorylation of incoming sugar substrates concomitantly with their translocation across the cell membrane. Involved in cellobiose transport with PtcB and CelB. This system can also transport lactose. This Lactococcus lactis subsp. lactis (strain IL1403) (Streptococcus lactis) protein is PTS system cellobiose-specific EIIA component.